The primary structure comprises 430 residues: Serine/threonine-protein kinase Sgk1 (430 aa).

The interval 1–60 (MTVKTEAARSTLTYSRMRGMVAILIAFMKQRRMGLNDFIQKLANNSYACKHPEVQSYLKI) is necessary for localization to the mitochondria. A disordered region spans residues 66-92 (PELMNANPSPPPSPSQQINLGPSSNPH). Ser-74 is subject to Phosphoserine. At Ser-78 the chain carries Phosphoserine; by MAPK7. A compositionally biased stretch (polar residues) spans 81 to 91 (QQINLGPSSNP). Positions 98–354 (FHFLKVIGKG…FMEIKSHIFF (257 aa)) constitute a Protein kinase domain. ATP is bound by residues 104-112 (IGKGSFGKV) and Lys-127. The Nuclear localization signal motif lies at 131–141 (KKAILKKKEEK). Asp-222 functions as the Proton acceptor in the catalytic mechanism. A Phosphothreonine; by PDPK1 modification is found at Thr-256. Residues 355–430 (SLINWDDLIN…SYAPPMDSFL (76 aa)) form the AGC-kinase C-terminal domain. Position 368 is a phosphothreonine; by PKA (Thr-368). A phosphoserine mark is found at Ser-396, Ser-400, and Ser-421.

Belongs to the protein kinase superfamily. AGC Ser/Thr protein kinase family. As to quaternary structure, homodimer; disulfide-linked. Forms a trimeric complex with FBXW7 and NOTCH1. Interacts with MAPK3/ERK1, MAPK1/ERK2, MAP2K1/MEK1, MAP2K2/MEK2, NEDD4, NEDD4L, MAPK7, CREB1, SLC9A3R2/NHERF2 and KCNJ1/ROMK1. Associates with the mammalian target of rapamycin complex 2 (mTORC2) via an interaction with MAPKAP1/SIN1. Interacts with MAPT/TAU. Post-translationally, regulated by phosphorylation. Activated by phosphorylation on Ser-421 by mTORC2, transforming it into a substrate for PDPK1 which phosphorylates it on Thr-256. Phosphorylation on Ser-396 and Ser-400 are also essential for its activity. Phosphorylation on Ser-78 by MAPK7 is required for growth factor-induced cell cycle progression. Ubiquitinated by NEDD4L; which promotes proteasomal degradation. Ubiquitinated by SYVN1 at the endoplasmic reticulum; which promotes rapid proteasomal degradation and maintains a high turnover rate in resting cells. In terms of tissue distribution, expressed in most tissues with highest levels in the ovary, thymus and lung. In the kidney, expressed within glomeruli of the cortex, at low levels in outer medulla and moderate levels in inner medulla and papilla.

The protein resides in the cytoplasm. It localises to the nucleus. It is found in the endoplasmic reticulum membrane. Its subcellular location is the cell membrane. The protein localises to the mitochondrion. The catalysed reaction is L-seryl-[protein] + ATP = O-phospho-L-seryl-[protein] + ADP + H(+). The enzyme catalyses L-threonyl-[protein] + ATP = O-phospho-L-threonyl-[protein] + ADP + H(+). With respect to regulation, two specific sites, one in the kinase domain (Thr-256) and the other in the C-terminal regulatory region (Ser-421), need to be phosphorylated for its full activation. Phosphorylation at Ser-396 and Ser-400 are also essential for its activity. Activated by WNK1, WNK2, WNK3 and WNK4. Serine/threonine-protein kinase which is involved in the regulation of a wide variety of ion channels, membrane transporters, cellular enzymes, transcription factors, neuronal excitability, cell growth, proliferation, survival, migration and apoptosis. Plays an important role in cellular stress response. Contributes to regulation of renal Na(+) retention, renal K(+) elimination, salt appetite, gastric acid secretion, intestinal Na(+)/H(+) exchange and nutrient transport, insulin-dependent salt sensitivity of blood pressure, salt sensitivity of peripheral glucose uptake, cardiac repolarization and memory consolidation. Up-regulates Na(+) channels: SCNN1A/ENAC, SCN5A and ASIC1/ACCN2, K(+) channels: KCNJ1/ROMK1, KCNA1-5, KCNQ1-5 and KCNE1, epithelial Ca(2+) channels: TRPV5 and TRPV6, chloride channels: BSND, CLCN2 and CFTR, glutamate transporters: SLC1A3/EAAT1, SLC1A2 /EAAT2, SLC1A1/EAAT3, SLC1A6/EAAT4 and SLC1A7/EAAT5, amino acid transporters: SLC1A5/ASCT2, SLC38A1/SN1 and SLC6A19, creatine transporter: SLC6A8, Na(+)/dicarboxylate cotransporter: SLC13A2/NADC1, Na(+)-dependent phosphate cotransporter: SLC34A2/NAPI-2B, glutamate receptor: GRIK2/GLUR6. Up-regulates carriers: SLC9A3/NHE3, SLC12A1/NKCC2, SLC12A3/NCC, SLC5A3/SMIT, SLC2A1/GLUT1, SLC5A1/SGLT1 and SLC15A2/PEPT2. Regulates enzymes: GSK3A/B, PMM2 and Na(+)/K(+) ATPase, and transcription factors: CTNNB1 and nuclear factor NF-kappa-B. Stimulates sodium transport into epithelial cells by enhancing the stability and expression of SCNN1A/ENAC. This is achieved by phosphorylating the NEDD4L ubiquitin E3 ligase, promoting its interaction with 14-3-3 proteins, thereby preventing it from binding to SCNN1A/ENAC and targeting it for degradation. Regulates store-operated Ca(+2) entry (SOCE) by stimulating ORAI1 and STIM1. Regulates KCNJ1/ROMK1 directly via its phosphorylation or indirectly via increased interaction with SLC9A3R2/NHERF2. Phosphorylates MDM2 and activates MDM2-dependent ubiquitination of p53/TP53. Phosphorylates SLC2A4/GLUT4 and up-regulates its activity. Phosphorylates APBB1/FE65 and promotes its localization to the nucleus. Phosphorylates FBXW7 and plays an inhibitory role in the NOTCH1 signaling. Phosphorylates FOXO1 resulting in its relocalization from the nucleus to the cytoplasm. Phosphorylates FOXO3, promoting its exit from the nucleus and interference with FOXO3-dependent transcription. Phosphorylates BRAF and MAP3K3/MEKK3 and inhibits their activity. Phosphorylates SLC9A3/NHE3 in response to dexamethasone, resulting in its activation and increased localization at the cell membrane. Phosphorylates CREB1. Necessary for vascular remodeling during angiogenesis. Phosphorylates MAPT/TAU and mediates microtubule depolymerization and neurite formation in hippocampal neurons. Phosphorylates MAPK1/ERK2 and activates it by enhancing its interaction with MAP2K1/MEK1 and MAP2K2/MEK2. May also play an important role in the development of particular groups of neurons in the postnatal brain. The protein is Serine/threonine-protein kinase Sgk1 (Sgk1) of Rattus norvegicus (Rat).